The primary structure comprises 344 residues: Interactor of constitutive active ROPs 1 (344 aa).

Disordered stretches follow at residues M1–L74, E92–D139, H186–V218, and F307–K344. Positions S19–S29 are enriched in low complexity. Residues Q60 to K108 adopt a coiled-coil conformation. Basic and acidic residues-rich tracts occupy residues A93–H103, R114–D139, and H186–S195. Positions V145–A273 form a coiled coil. Positions L196–K211 are enriched in polar residues.

It belongs to the ICR family. As to quaternary structure, homooligomer. Interacts with ARAC3, ARAC4, ARAC8, ARAC11 and SEC3A, but not with ICR2 or EXO70A1. Expressed in mature and germinating pollen. Expressed throughout the embryo but not in the hypophysis and quiescent center (QC). In roots, absent from the QC and the stem cells.

It localises to the cell membrane. It is found in the nucleus. In terms of biological role, acts as a scaffold, mediating interaction of ROPs with different proteins. Required for primary and adventitious root maintenance, but not for their formation. Promotes the stabilization of ARAC11 on the plasma membrane of the pollen tube initiation site but not the activation of ARAC11. Regulates directionality of polar auxin transport, and is required for the formation of a stable auxin maximum and tip localized auxin gradient during embryogenesis, organogenesis, and meristem activity. Involved in exocytosis and in the recycling of PIN proteins back to the plasma membrane. This Arabidopsis thaliana (Mouse-ear cress) protein is Interactor of constitutive active ROPs 1 (ICR1).